The primary structure comprises 692 residues: Single-strand DNA endonuclease ASTE1 (692 aa).

Belongs to the asteroid family.

Structure-specific DNA endonuclease that specifically cleaves single-stranded DNA and 3' overhang DNA. This is Single-strand DNA endonuclease ASTE1 (aste1a) from Danio rerio (Zebrafish).